Here is a 308-residue protein sequence, read N- to C-terminus: Endonuclease G, mitochondrial (308 aa).

Catalysis depends on histidine 148, which acts as the Proton acceptor. Residue asparagine 180 participates in Mg(2+) binding.

The protein belongs to the DNA/RNA non-specific endonuclease family. In terms of assembly, homodimer; disulfide-linked. Interacts with crn-5, crn-4, crn-1 and cyn-13. Requires Mg(2+) as cofactor.

It is found in the mitochondrion. Functionally, endonuclease important for programmed cell death; it mediates apoptotic DNA fragmentation. The protein is Endonuclease G, mitochondrial (cps-6) of Caenorhabditis elegans.